Consider the following 367-residue polypeptide: WAT1-related protein At3g28050 (367 aa).

The next 10 helical transmembrane spans lie at 10 to 30, 40 to 60, 73 to 93, 103 to 123, 142 to 162, 179 to 199, 211 to 231, 246 to 266, 276 to 296, and 301 to 321; these read VLPV…NTLF, FHVF…PSLF, FSIL…NIMG, TLAS…AVVF, TVVS…VVIA, WILG…WYIV, FTVV…VTLF, IALV…NTIH, LFVA…GVIF, and LYIG…TVMW. 2 EamA domains span residues 25–153 and 195–319; these read GLNT…FIVT and LWYI…FYTV. The disordered stretch occupies residues 338–367; that stretch reads HEEANEADLDSPSGSQKAPLLESYKNDEHV.

Belongs to the drug/metabolite transporter (DMT) superfamily. Plant drug/metabolite exporter (P-DME) (TC 2.A.7.4) family.

The protein resides in the membrane. The sequence is that of WAT1-related protein At3g28050 from Arabidopsis thaliana (Mouse-ear cress).